Reading from the N-terminus, the 708-residue chain is KIIVNRLARKVEVDSIVVPLPFSSQELSIEDSGSMYVITTPAGLIIKWSHLTGIIDIHFGFRFNLSSYTEGLCGICNEDPDDDLRMQNGTIITNMEDIGLFIESWEIEKSFEVTMRRPVRNCTEHDCSQCIDLLNRRIFIPCHDKVSPEDFCEKMWINYTYFWNYECDALSAYVALCNKFDICIQWRTPDYCSLSCPEGKEYQPCVRPCEARTCLNQWFYGHSSCLNLREDCACKDGTILHRPHSTQCIPEKECACTDSEDQPRTAGEIWNGGIDECALYKCLENGSVIPIEPDCDEEPTPVCEREAEVVMGIIDKWTCCSKEVCGCDATLCEPTIPTCTNGEKLIVGHSPLSCCPQYKCECDPLKCPSISTPECREDQFMIQVQQEEPCCFSPFCVCESCTKPVPLCHDGEFLTVDLNSTHFCCPQYYCVCEPNLCPMPLLNCAEDMNLVKENVFGQCCPTWHCEKDDVCVFQEVSVLNPGQSMIKYLEEDFCYTIECLEEKDNHTGFHTLNFTLVNCSKKCDVHQVYTPSPSDYDCCGTCKNVSCKFHMENGTSVVYVVGSTWHYNCTTYECVKTDEGAIILNYTMVCPPFNETECKMNEGIVKLYNEGCCKICKREERICQKVIIKSVIRKQDCMSQSLINVASCDGKCPSATIYNINIGSHLRFCKCCRENGVRNLSVPLYCSGNGTEIMYTLQEPIDCTCQWN.

Residues 1–113 (KIIVNRLARK…SWEIEKSFEV (113 aa)) enclose the VWFD domain. Residue asparagine 553 is glycosylated (N-linked (GlcNAc...) asparagine). Intrachain disulfides connect cysteine 616/cysteine 672, cysteine 637/cysteine 686, cysteine 648/cysteine 703, and cysteine 652/cysteine 705. Residues 616–708 (CKREERICQK…EPIDCTCQWN (93 aa)) enclose the CTCK domain.

The protein belongs to the otogelin family.

The protein localises to the secreted. This chain is Otogelin-like protein (OTOGL), found in Pongo abelii (Sumatran orangutan).